The following is a 507-amino-acid chain: Cyclin-dependent kinase-like 2 (507 aa).

A Protein kinase domain is found at 4–289; the sequence is YENLGLVGEG…CADLLHHDFF (286 aa). Residues 10–18 and Lys33 contribute to the ATP site; that span reads VGEGSYGMV. A [NKR]KIAxRE motif is present at residues 45–51; sequence KKIAMRE. The active-site Proton acceptor is the Asp126. A disordered region spans residues 365–392; it reads KTEKGTRASNGSCLHDNGTSHKGLSSTS.

Belongs to the protein kinase superfamily. CMGC Ser/Thr protein kinase family. CDC2/CDKX subfamily.

Its subcellular location is the cytoplasm. It localises to the nucleus. The enzyme catalyses L-seryl-[protein] + ATP = O-phospho-L-seryl-[protein] + ADP + H(+). The catalysed reaction is L-threonyl-[protein] + ATP = O-phospho-L-threonyl-[protein] + ADP + H(+). This is Cyclin-dependent kinase-like 2 from Rattus norvegicus (Rat).